Consider the following 530-residue polypeptide: Pyridoxine/pyridoxamine 5'-phosphate oxidase 1, chloroplastic (530 aa).

A chloroplast-targeting transit peptide spans 1-64 (MRNVIRRVTT…TLCTKVIIPN (64 aa)). Methionine 65 is modified (N-acetylmethionine). The region spanning 81 to 297 (AAEIDETLMG…SVAEKYKLEL (217 aa)) is the YjeF N-terminal domain. Residue 131–135 (NNGGD) coordinates (6S)-NADPHX. Residues asparagine 132 and aspartate 196 each coordinate K(+). (6S)-NADPHX is bound by residues 200–206 (GFSFHGA) and aspartate 238. Serine 241 serves as a coordination point for K(+). Residue 247–250 (EGDH) coordinates pyridoxal 5'-phosphate. 321–324 (RVNY) contacts substrate. 325–327 (VSP) is a binding site for pyridoxal 5'-phosphate. FMN is bound at residue 374–377 (RMVL). Residue lysine 379 participates in pyridoxal 5'-phosphate binding. FMN-binding positions include 389 to 390 (FT), 395 to 396 (KK), and glutamine 418. Pyridoxal 5'-phosphate is bound by residues tyrosine 436, arginine 440, and serine 444. Residues 453-454 (QS) and tryptophan 499 contribute to the FMN site. Residue 505-507 (RLH) participates in pyridoxal 5'-phosphate binding. Arginine 509 is an FMN binding site.

This sequence in the N-terminal section; belongs to the NnrE/AIBP family. It in the C-terminal section; belongs to the pyridoxamine 5'-phosphate oxidase family. Homodimer. It depends on FMN as a cofactor. Requires K(+) as cofactor. In terms of tissue distribution, expressed in leaves, stems, flowers and roots.

The protein resides in the plastid. It is found in the chloroplast. It carries out the reaction pyridoxamine 5'-phosphate + O2 + H2O = pyridoxal 5'-phosphate + H2O2 + NH4(+). It catalyses the reaction pyridoxine 5'-phosphate + O2 = pyridoxal 5'-phosphate + H2O2. The catalysed reaction is (6R)-NADHX = (6S)-NADHX. The enzyme catalyses (6R)-NADPHX = (6S)-NADPHX. It functions in the pathway cofactor metabolism; pyridoxal 5'-phosphate salvage; pyridoxal 5'-phosphate from pyridoxamine 5'-phosphate: step 1/1. Its pathway is cofactor metabolism; pyridoxal 5'-phosphate salvage; pyridoxal 5'-phosphate from pyridoxine 5'-phosphate: step 1/1. Its function is as follows. Catalyzes the oxidation of either pyridoxine 5'-phosphate (PNP) or pyridoxamine 5'-phosphate (PMP) into pyridoxal 5'-phosphate (PLP). Involved in the PLP salvage pathway. Has a higher preference for PNP over PMP. May also catalyze the epimerization of the S- and R-forms of NAD(P)HX, a damaged form of NAD(P)H that is a result of enzymatic or heat-dependent hydration. This is a prerequisite for the S-specific NAD(P)H-hydrate dehydratase to allow the repair of both epimers of NAD(P)HX. This Arabidopsis thaliana (Mouse-ear cress) protein is Pyridoxine/pyridoxamine 5'-phosphate oxidase 1, chloroplastic (PPOX1).